The following is a 258-amino-acid chain: Isoprenyl transferase (258 aa).

Asp-38 is a catalytic residue. Residue Asp-38 coordinates Mg(2+). Residues 39-42, Trp-43, Arg-51, His-55, and 83-85 contribute to the substrate site; these read GNGR and STE. The active-site Proton acceptor is the Asn-86. Substrate contacts are provided by residues Trp-87, Arg-89, Arg-206, and 212-214; that span reads RIS. Residue Glu-225 participates in Mg(2+) binding.

The protein belongs to the UPP synthase family. In terms of assembly, homodimer. Mg(2+) is required as a cofactor.

Its function is as follows. Catalyzes the condensation of isopentenyl diphosphate (IPP) with allylic pyrophosphates generating different type of terpenoids. This chain is Isoprenyl transferase, found in Bacillus thuringiensis subsp. konkukian (strain 97-27).